Reading from the N-terminus, the 175-residue chain is ATP synthase subunit b (175 aa).

The helical transmembrane segment at 22-42 threads the bilayer; sequence LNLLETNIINIAIVFGLLIFL.

The protein belongs to the ATPase B chain family. In terms of assembly, F-type ATPases have 2 components, F(1) - the catalytic core - and F(0) - the membrane proton channel. F(1) has five subunits: alpha(3), beta(3), gamma(1), delta(1), epsilon(1). F(0) has four main subunits: a(1), b(1), b'(1) and c(10-14). The alpha and beta chains form an alternating ring which encloses part of the gamma chain. F(1) is attached to F(0) by a central stalk formed by the gamma and epsilon chains, while a peripheral stalk is formed by the delta, b and b' chains.

It localises to the cell inner membrane. In terms of biological role, f(1)F(0) ATP synthase produces ATP from ADP in the presence of a proton or sodium gradient. F-type ATPases consist of two structural domains, F(1) containing the extramembraneous catalytic core and F(0) containing the membrane proton channel, linked together by a central stalk and a peripheral stalk. During catalysis, ATP synthesis in the catalytic domain of F(1) is coupled via a rotary mechanism of the central stalk subunits to proton translocation. Its function is as follows. Component of the F(0) channel, it forms part of the peripheral stalk, linking F(1) to F(0). This Gloeobacter violaceus (strain ATCC 29082 / PCC 7421) protein is ATP synthase subunit b.